We begin with the raw amino-acid sequence, 149 residues long: MRAVVQRVKEAFVIVDGKEVGRIQRGLCLLVGVAQDDTEEDADYLCEKVANLRIFEDETSKFNLSLMDVGGEVLVISNFTVMGDARKGRRPNFMFAAEKEKAERLYNYFVEKLKQKVRKVECGVFQAHMEVSILNDGPVTVLLDSKKIF.

The short motif at 137–138 is the Gly-cisPro motif, important for rejection of L-amino acids element; sequence GP.

It belongs to the DTD family. Homodimer.

The protein localises to the cytoplasm. The catalysed reaction is glycyl-tRNA(Ala) + H2O = tRNA(Ala) + glycine + H(+). It catalyses the reaction a D-aminoacyl-tRNA + H2O = a tRNA + a D-alpha-amino acid + H(+). Its function is as follows. An aminoacyl-tRNA editing enzyme that deacylates mischarged D-aminoacyl-tRNAs. Also deacylates mischarged glycyl-tRNA(Ala), protecting cells against glycine mischarging by AlaRS. Acts via tRNA-based rather than protein-based catalysis; rejects L-amino acids rather than detecting D-amino acids in the active site. By recycling D-aminoacyl-tRNA to D-amino acids and free tRNA molecules, this enzyme counteracts the toxicity associated with the formation of D-aminoacyl-tRNA entities in vivo and helps enforce protein L-homochirality. This chain is D-aminoacyl-tRNA deacylase, found in Caldicellulosiruptor bescii (strain ATCC BAA-1888 / DSM 6725 / KCTC 15123 / Z-1320) (Anaerocellum thermophilum).